Here is a 786-residue protein sequence, read N- to C-terminus: Sucrose synthase (786 aa).

The interval 259 to 736 (MIFSLVVLSP…ALKRVEERYN (478 aa)) is GT-B glycosyltransferase.

The protein belongs to the glycosyltransferase 1 family. In terms of assembly, homotetramer.

It catalyses the reaction an NDP-alpha-D-glucose + D-fructose = a ribonucleoside 5'-diphosphate + sucrose + H(+). Functionally, catalyzes the reversible conversion of sucrose and a nucleotide disphosphate (NDP) into fructose and NDP-glucose; although the reaction is freely reversible in vitro, the physiological reaction seems to be sucrose cleavage. Unlike characterized plant enzymes prefers ADP as a cosubstrate, whereas plants prefer UDP. Its preference for ADP over UDP suggests it may directly link sucrose and glycogen metabolism. This is Sucrose synthase from Denitrovibrio acetiphilus (strain DSM 12809 / NBRC 114555 / N2460).